The sequence spans 163 residues: Putative NOL1/NOP2/Sun domain family member 5B (163 aa).

Cysteine 93 acts as the Nucleophile in catalysis.

This sequence belongs to the class I-like SAM-binding methyltransferase superfamily. RsmB/NOP family. Ubiquitous.

The chain is Putative NOL1/NOP2/Sun domain family member 5B (NSUN5P1) from Homo sapiens (Human).